The sequence spans 459 residues: Nuclear distribution protein nudF 1 (459 aa).

The LisH domain occupies 9–41; it reads QAEELHKSIIAYLSANNLSNAASALRGELGLSE. A coiled-coil region spans residues 61 to 88; sequence TSIVRLQKKIMDLEARCGALQTELNNAT. 8 WD repeats span residues 114–155, 157–197, 201–240, 243–282, 288–349, 351–390, 395–440, and 442–459; these read SHRN…TTLK, HTRA…KNIR, GHEH…CVKT, GHSG…NPEA, GHDH…LMTL, GHDN…KCVK, AHGR…PQVQ, and RCVV…IFAN.

It belongs to the WD repeat LIS1/nudF family. Self-associates. Interacts with nudE and dynein.

Its subcellular location is the cytoplasm. It localises to the cytoskeleton. The protein resides in the spindle pole. Positively regulates the activity of the minus-end directed microtubule motor protein dynein. May enhance dynein-mediated microtubule sliding by targeting dynein to the microtubule plus end. Required for nuclear migration during vegetative growth as well as development. Required for retrograde early endosome (EE) transport from the hyphal tip. Required for localization of dynein to the mitotic spindle poles. Recruits additional proteins to the dynein complex at SPBs. The polypeptide is Nuclear distribution protein nudF 1 (Talaromyces marneffei (strain ATCC 18224 / CBS 334.59 / QM 7333) (Penicillium marneffei)).